A 212-amino-acid chain; its full sequence is Peptide methionine sulfoxide reductase MsrA (212 aa).

The active site involves C52.

This sequence belongs to the MsrA Met sulfoxide reductase family.

The catalysed reaction is L-methionyl-[protein] + [thioredoxin]-disulfide + H2O = L-methionyl-(S)-S-oxide-[protein] + [thioredoxin]-dithiol. It carries out the reaction [thioredoxin]-disulfide + L-methionine + H2O = L-methionine (S)-S-oxide + [thioredoxin]-dithiol. In terms of biological role, has an important function as a repair enzyme for proteins that have been inactivated by oxidation. Catalyzes the reversible oxidation-reduction of methionine sulfoxide in proteins to methionine. This Shigella boydii serotype 18 (strain CDC 3083-94 / BS512) protein is Peptide methionine sulfoxide reductase MsrA.